The primary structure comprises 1094 residues: Isoleucine--tRNA ligase (1094 aa).

The 'HIGH' region signature appears at 53–63; the sequence is PFANGLPHYGH. The short motif at 624 to 628 is the 'KMSKS' region element; the sequence is KLSKR. K627 contributes to the ATP binding site.

It belongs to the class-I aminoacyl-tRNA synthetase family. IleS type 2 subfamily. Monomer. It depends on Zn(2+) as a cofactor.

The protein localises to the cytoplasm. It catalyses the reaction tRNA(Ile) + L-isoleucine + ATP = L-isoleucyl-tRNA(Ile) + AMP + diphosphate. Catalyzes the attachment of isoleucine to tRNA(Ile). As IleRS can inadvertently accommodate and process structurally similar amino acids such as valine, to avoid such errors it has two additional distinct tRNA(Ile)-dependent editing activities. One activity is designated as 'pretransfer' editing and involves the hydrolysis of activated Val-AMP. The other activity is designated 'posttransfer' editing and involves deacylation of mischarged Val-tRNA(Ile). The chain is Isoleucine--tRNA ligase from Rickettsia felis (strain ATCC VR-1525 / URRWXCal2) (Rickettsia azadi).